A 248-amino-acid chain; its full sequence is 2,3-bisphosphoglycerate-dependent phosphoglycerate mutase (248 aa).

Substrate contacts are provided by residues 8–15 (RHGESTWN), 21–22 (TG), Arg60, 87–90 (ERHY), Lys98, and 114–115 (RR). His9 acts as the Tele-phosphohistidine intermediate in catalysis. Residue Glu87 is the Proton donor/acceptor of the active site. Residues 118 to 137 (DTPPPALEPTDPRASYDDPR) are disordered. Basic and acidic residues predominate over residues 127 to 137 (TDPRASYDDPR). 183–184 (GN) contributes to the substrate binding site.

The protein belongs to the phosphoglycerate mutase family. BPG-dependent PGAM subfamily. In terms of assembly, homodimer.

The catalysed reaction is (2R)-2-phosphoglycerate = (2R)-3-phosphoglycerate. It participates in carbohydrate degradation; glycolysis; pyruvate from D-glyceraldehyde 3-phosphate: step 3/5. In terms of biological role, catalyzes the interconversion of 2-phosphoglycerate and 3-phosphoglycerate. The sequence is that of 2,3-bisphosphoglycerate-dependent phosphoglycerate mutase from Cupriavidus necator (strain ATCC 17699 / DSM 428 / KCTC 22496 / NCIMB 10442 / H16 / Stanier 337) (Ralstonia eutropha).